Here is an 853-residue protein sequence, read N- to C-terminus: MSDTNDQGNSGGRKPLTVVRKTSGTVKQSFSHGRSKQVVVETKKRRPVSSGGGQGGDSGPSTPSASDGMEAKLVALAAKLGITVAELKARQKVLEQRKAEEASRAKDTEAERAAQDRLRTEQERKQQEAREREEAELRRRAEEEAAKLADVASREAVERPSKAPRAAPAAQTPPAADGEADAGRSKRSSGGGASKPARDDRADRAREVATKPSRGDAERRRGKLTIASALGDDADRQRSLASVRRARERERERRVGGGDSNDKTSIEVTLPETITLQDLAQRMNERVADVVKFMFKQGEMLRGNDIVDADMAELIAGEFGHTVRRVSEADVEIGLEGTDDRDEDLQPRAPIVTIMGHVDHGKTSLLDALRKTDVAGGEAGGITQHIGAYQVQLKSGERITFLDTPGHAAFTAMRARGANATDIAILVVAADDSVKPQTIESISHAKAAGVPIVVAITKSDLHDANPEKVLTDLLQYDIQVEAMGGVTQAVKVSAKTGAGLDELTDAISIQAEILELKANPNRQADGVVIESKLDKGRGPVATVLVKRGTLKRGDIVVAGANWGKVRALVDERGQQLADAGPSLPVEVLGLDGAPDPGDAIVVVDSEARAREITEYRIRTKRQVAGNASVAARASLDQLMNRLKDGAIVTSELPIVLKGDVQGSVEAITMSLDKISTEEVRAKVIHGAVGGISESDVLLARSSNAPIFAFNVRANKQARDLAEREGVEIRYYSIIYDLLDDVKATLSGMLAPEKRETFLGYADILEVFNITKVGKVAGCRISEGKVMRGCGVRLLRDNVVIHEGKLKTLKRFKDEVSEVNAGMECGMAFERYDDIRVGDKIECFQVEEIARTLA.

Disordered stretches follow at residues 1-68 (MSDT…ASDG) and 94-265 (LEQR…DKTS). Residues 20–32 (RKTSGTVKQSFSH) show a composition bias toward polar residues. Positions 94–161 (LEQRKAEEAS…ASREAVERPS (68 aa)) are enriched in basic and acidic residues. Low complexity predominate over residues 163-176 (APRAAPAAQTPPAA). Composition is skewed to basic and acidic residues over residues 196-219 (PARDDRADRAREVATKPSRGDAER) and 245-265 (RARERERERRVGGGDSNDKTS). The region spanning 347–515 (PRAPIVTIMG…AISIQAEILE (169 aa)) is the tr-type G domain. The interval 356-363 (GHVDHGKT) is G1. 356–363 (GHVDHGKT) contributes to the GTP binding site. The tract at residues 381–385 (GITQH) is G2. The segment at 403-406 (DTPG) is G3. GTP-binding positions include 403–407 (DTPGH) and 457–460 (TKSD). Residues 457-460 (TKSD) are G4. The tract at residues 493-495 (SAK) is G5.

Belongs to the TRAFAC class translation factor GTPase superfamily. Classic translation factor GTPase family. IF-2 subfamily.

It localises to the cytoplasm. In terms of biological role, one of the essential components for the initiation of protein synthesis. Protects formylmethionyl-tRNA from spontaneous hydrolysis and promotes its binding to the 30S ribosomal subunits. Also involved in the hydrolysis of GTP during the formation of the 70S ribosomal complex. The polypeptide is Translation initiation factor IF-2 (Hyphomonas neptunium (strain ATCC 15444)).